A 293-amino-acid chain; its full sequence is Shikimate dehydrogenase (NADP(+)) (293 aa).

Shikimate contacts are provided by residues 26-28 (SKS) and T73. K77 functions as the Proton acceptor in the catalytic mechanism. An NADP(+)-binding site is contributed by E89. Shikimate contacts are provided by N98 and D113. NADP(+)-binding positions include 137–141 (GAGGA), 161–166 (NRTRQR), and I231. A shikimate-binding site is contributed by Y233. G254 contributes to the NADP(+) binding site.

It belongs to the shikimate dehydrogenase family. In terms of assembly, homodimer.

The enzyme catalyses shikimate + NADP(+) = 3-dehydroshikimate + NADPH + H(+). Its pathway is metabolic intermediate biosynthesis; chorismate biosynthesis; chorismate from D-erythrose 4-phosphate and phosphoenolpyruvate: step 4/7. In terms of biological role, involved in the biosynthesis of the chorismate, which leads to the biosynthesis of aromatic amino acids. Catalyzes the reversible NADPH linked reduction of 3-dehydroshikimate (DHSA) to yield shikimate (SA). This Bartonella quintana (strain Toulouse) (Rochalimaea quintana) protein is Shikimate dehydrogenase (NADP(+)).